The following is a 154-amino-acid chain: SsrA-binding protein (154 aa).

The protein belongs to the SmpB family.

The protein localises to the cytoplasm. In terms of biological role, required for rescue of stalled ribosomes mediated by trans-translation. Binds to transfer-messenger RNA (tmRNA), required for stable association of tmRNA with ribosomes. tmRNA and SmpB together mimic tRNA shape, replacing the anticodon stem-loop with SmpB. tmRNA is encoded by the ssrA gene; the 2 termini fold to resemble tRNA(Ala) and it encodes a 'tag peptide', a short internal open reading frame. During trans-translation Ala-aminoacylated tmRNA acts like a tRNA, entering the A-site of stalled ribosomes, displacing the stalled mRNA. The ribosome then switches to translate the ORF on the tmRNA; the nascent peptide is terminated with the 'tag peptide' encoded by the tmRNA and targeted for degradation. The ribosome is freed to recommence translation, which seems to be the essential function of trans-translation. The polypeptide is SsrA-binding protein (Staphylococcus saprophyticus subsp. saprophyticus (strain ATCC 15305 / DSM 20229 / NCIMB 8711 / NCTC 7292 / S-41)).